The primary structure comprises 154 residues: SsrA-binding protein (154 aa).

Residues 135 to 154 (KREDLKRRQDQRDMARAMKR) are disordered.

The protein belongs to the SmpB family.

The protein resides in the cytoplasm. In terms of biological role, required for rescue of stalled ribosomes mediated by trans-translation. Binds to transfer-messenger RNA (tmRNA), required for stable association of tmRNA with ribosomes. tmRNA and SmpB together mimic tRNA shape, replacing the anticodon stem-loop with SmpB. tmRNA is encoded by the ssrA gene; the 2 termini fold to resemble tRNA(Ala) and it encodes a 'tag peptide', a short internal open reading frame. During trans-translation Ala-aminoacylated tmRNA acts like a tRNA, entering the A-site of stalled ribosomes, displacing the stalled mRNA. The ribosome then switches to translate the ORF on the tmRNA; the nascent peptide is terminated with the 'tag peptide' encoded by the tmRNA and targeted for degradation. The ribosome is freed to recommence translation, which seems to be the essential function of trans-translation. The sequence is that of SsrA-binding protein from Microcystis aeruginosa (strain NIES-843 / IAM M-2473).